We begin with the raw amino-acid sequence, 162 residues long: uncharacterized protein (162 aa).

In terms of domain architecture, HTH asnC-type spans 6-71 (LDDLDRAILK…PIKPRKLALV (66 aa)). Positions 25–44 (IAEISNQLKKPESTVHFRIK) form a DNA-binding region, H-T-H motif.

This is an uncharacterized protein from Pyrococcus abyssi (strain GE5 / Orsay).